A 249-amino-acid chain; its full sequence is Globin-like protein 9 (249 aa).

Residues 20–43 (TNKGPNGLARRGTQRGCSRSKSTR) form a disordered region. A Globin domain is found at 52-205 (SLTFSQKQAL…LIDELRGGFE (154 aa)). Heme-binding residues include H116 and H148.

Belongs to the globin family.

In Caenorhabditis elegans, this protein is Globin-like protein 9 (glb-9).